The chain runs to 549 residues: Protein EPD1 (549 aa).

An N-terminal signal peptide occupies residues 1-22 (MLLNSLFPSILAAATFVTSAAA). Asn40 and Asn59 each carry an N-linked (GlcNAc...) asparagine glycan. Cys72 and Cys101 are disulfide-bonded. 2 N-linked (GlcNAc...) asparagine glycosylation sites follow: Asn147 and Asn163. Cystine bridges form between Cys214–Cys347, Cys232–Cys263, Cys369–Cys420, Cys378–Cys444, and Cys397–Cys402. Positions 336-356 (AESASGVSRTSCPTNTDNWEA) are enriched in polar residues. The tract at residues 336–361 (AESASGVSRTSCPTNTDNWEASTELP) is disordered. Residue Asn383 is glycosylated (N-linked (GlcNAc...) asparagine). Asn408 and Asn438 each carry an N-linked (GlcNAc...) asparagine glycan. The interval 479–519 (SVRTDTSEATTDSGSGSSNSGSASSSKSTSSSTSSGSSGSK) is disordered. Over residues 487–519 (ATTDSGSGSSNSGSASSSKSTSSSTSSGSSGSK) the composition is skewed to low complexity.

This sequence belongs to the glycosyl hydrolase 72 family.

The protein localises to the cell membrane. In Candida maltosa (Yeast), this protein is Protein EPD1 (EPD1).